The sequence spans 504 residues: Galactokinase (504 aa).

Positions 47, 53, 54, and 56 each coordinate alpha-D-galactose. ATP contacts are provided by Gly150, Gly152, Ser154, and Ser155. Residues Asn196 and Asp200 each contribute to the alpha-D-galactose site. Asp200 (proton acceptor) is an active-site residue. 3 residues coordinate ATP: Ser244, Asn245, and Lys246. Tyr254 is a binding site for alpha-D-galactose.

The protein belongs to the GHMP kinase family. GalK subfamily.

It catalyses the reaction alpha-D-galactose + ATP = alpha-D-galactose 1-phosphate + ADP + H(+). Its pathway is carbohydrate metabolism; galactose metabolism. In terms of biological role, galactokinase is a key enzyme in the galactose metabolism where it catalyzes the conversion of alpha-D-galactose to galactose 1-phosphate. Can also induce the transcription of the gal genes in response to the organism being challenged with galactose as the sole source of carbon. The protein is Galactokinase of Candida parapsilosis (Yeast).